The following is a 191-amino-acid chain: Prostaglandin-H2 D-isomerase (191 aa).

The signal sequence occupies residues 1 to 24 (MAALHTLWMGLVLLGVLGVLQTQA). Gln-25 carries the pyrrolidone carboxylic acid modification. The N-linked (GlcNAc...) asparagine glycan is linked to Asn-51. Catalysis depends on Cys-65, which acts as the Nucleophile. Asn-78 carries an N-linked (GlcNAc...) asparagine glycan. A disulfide bond links Cys-89 and Cys-186.

It belongs to the calycin superfamily. Lipocalin family. Monomer.

The protein localises to the rough endoplasmic reticulum. It localises to the nucleus membrane. The protein resides in the golgi apparatus. It is found in the cytoplasm. Its subcellular location is the perinuclear region. The protein localises to the secreted. It catalyses the reaction prostaglandin H2 = prostaglandin D2. Functionally, catalyzes the conversion of PGH2 to PGD2, a prostaglandin involved in smooth muscle contraction/relaxation and a potent inhibitor of platelet aggregation. Involved in a variety of CNS functions, such as sedation, NREM sleep and PGE2-induced allodynia, and may have an anti-apoptotic role in oligodendrocytes. Binds small non-substrate lipophilic molecules, including biliverdin, bilirubin, retinal, retinoic acid and thyroid hormone, and may act as a scavenger for harmful hydrophobic molecules and as a secretory retinoid and thyroid hormone transporter. Possibly involved in development and maintenance of the blood-brain, blood-retina, blood-aqueous humor and blood-testis barrier. It is likely to play important roles in both maturation and maintenance of the central nervous system and male reproductive system. Involved in PLA2G3-dependent maturation of mast cells. PLA2G3 is secreted by immature mast cells and acts on nearby fibroblasts upstream to PTDGS to synthesize PGD2, which in turn promotes mast cell maturation and degranulation via PTGDR. In Ursus arctos (Brown bear), this protein is Prostaglandin-H2 D-isomerase (PTGDS).